Reading from the N-terminus, the 328-residue chain is Gonadotropin-releasing hormone receptor (328 aa).

The Extracellular portion of the chain corresponds to 1 to 38 (MANSDSPEQNENHCSAINSSIPLTPGSLPTLTLSGKIR). The N-linked (GlcNAc...) asparagine glycan is linked to Asn18. The chain crosses the membrane as a helical span at residues 39 to 58 (VTVTFFLFLLSTIFNTSFLL). Residues 59-77 (KLQNWTQRKEKRKKLSRMK) lie on the Cytoplasmic side of the membrane. The helical transmembrane segment at 78–97 (LLLKHLTLANLLETLIVMPL) threads the bilayer. At 98 to 115 (DGMWNITVQWYAGELLCK) the chain is on the extracellular side. Asn102 carries N-linked (GlcNAc...) asparagine glycosylation. Residues Cys114 and Cys196 are joined by a disulfide bond. The chain crosses the membrane as a helical span at residues 116 to 137 (VLSYLKLFSMYAPAFMMVVISL). Topologically, residues 138-164 (DRSLAITKPLAVKSNSKLGQFMIGLAW) are cytoplasmic. A helical transmembrane segment spans residues 165-184 (LLSSIFAGPQLYIFGMIHLA). The Extracellular segment spans residues 185–212 (DDSGQTEGFSQCVTHCSFPQWWHQAFYN). Residues 213-232 (FFTFSCLFIIPLLIMVICNA) traverse the membrane as a helical segment. At 233 to 281 (KIIFTLTRVLHQDPHKLQLNQSKNNIPRARLRTLKMTVAFATSFTVCWT) the chain is on the cytoplasmic side. The helical transmembrane segment at 282 to 300 (PYYVLGIWYWFDPDMVNRV) threads the bilayer. Topologically, residues 301-306 (SDPVNH) are extracellular. A helical membrane pass occupies residues 307–326 (FFFLFAFLNPCFDPLIYGYF). Over 327–328 (SL) the chain is Cytoplasmic.

Belongs to the G-protein coupled receptor 1 family.

The protein resides in the cell membrane. Its function is as follows. Receptor for gonadotropin releasing hormone (GnRH) that mediates the action of GnRH to stimulate the secretion of the gonadotropic hormones luteinizing hormone (LH) and follicle-stimulating hormone (FSH). This receptor mediates its action by association with G-proteins that activate a phosphatidylinositol-calcium second messenger system. In Bos taurus (Bovine), this protein is Gonadotropin-releasing hormone receptor (GNRHR).